We begin with the raw amino-acid sequence, 212 residues long: MSHNTSIASQGMPAMAGPETGGAGMTDNVYQSLLRNRIVFLGSEVKDENANALCAQMLLLNAEDPEADIYLYINSPGGSVTGGMAIYDTMQWISNDVATVTMGMAASMGQFLLTAGTPGKRYALPHAKILMHQPLGGVGGTATEIAINAKMLKDTKRELSQLNADHSGHTLEQILEDSDRDHWFTAQEALEYGLIDHVYSNASQLRGDAPNQ.

The interval 1–20 (MSHNTSIASQGMPAMAGPET) is disordered. Serine 107 (nucleophile) is an active-site residue. Residue histidine 132 is part of the active site.

Belongs to the peptidase S14 family. Fourteen ClpP subunits assemble into 2 heptameric rings which stack back to back to give a disk-like structure with a central cavity, resembling the structure of eukaryotic proteasomes.

It localises to the cytoplasm. It carries out the reaction Hydrolysis of proteins to small peptides in the presence of ATP and magnesium. alpha-casein is the usual test substrate. In the absence of ATP, only oligopeptides shorter than five residues are hydrolyzed (such as succinyl-Leu-Tyr-|-NHMec, and Leu-Tyr-Leu-|-Tyr-Trp, in which cleavage of the -Tyr-|-Leu- and -Tyr-|-Trp bonds also occurs).. In terms of biological role, cleaves peptides in various proteins in a process that requires ATP hydrolysis. Has a chymotrypsin-like activity. Plays a major role in the degradation of misfolded proteins. In Cutibacterium acnes (strain DSM 16379 / KPA171202) (Propionibacterium acnes), this protein is ATP-dependent Clp protease proteolytic subunit 2.